A 1120-amino-acid polypeptide reads, in one-letter code: Vacuolar cation-chloride cotransporter 1 (1120 aa).

A disordered region spans residues 1-21 (MVSRFYQIPGTHRPSSAISSS). The Cytoplasmic portion of the chain corresponds to 1–62 (MVSRFYQIPG…YDPDNPNKDK (62 aa)). Position 34 is a phosphoserine (Ser34). A helical transmembrane segment spans residues 63–83 (LGTYDGVFVPTALNVLSILMF). Over 84 to 85 (LR) the chain is Vacuolar. A helical membrane pass occupies residues 86 to 106 (FGFILGQLGIICTIGLLLLSY). Over 107–145 (TINLLTTLSISAISTNGTVRGGGAYYMISRSLGPEFGGS) the chain is Cytoplasmic. A helical membrane pass occupies residues 146–166 (IGLVFFLGQVFNAGMNAVGII). Over 167 to 193 (EPLLYNLGYSAQGEPPAALGELLPRGH) the chain is Vacuolar. A helical transmembrane segment spans residues 194–214 (WHEFTYATVILFLCFSVAFVG). The Cytoplasmic segment spans residues 215–221 (SQTVSRA). Residues 222–242 (GNILFLVLAASIFSIPLSALI) traverse the membrane as a helical segment. Residues 243–283 (RSPFTEGGISYTGPSWQTFHDNLLPHLTKGAAGSLLKGKET) lie on the Vacuolar side of the membrane. Residues 284–304 (FNDLFGVFFPATAGIFAGAGM) traverse the membrane as a helical segment. The Cytoplasmic portion of the chain corresponds to 305-317 (SSELRKPSKSIPK). A helical transmembrane segment spans residues 318 to 338 (GTLWGLLFTFICYAVVVFSMG). The Vacuolar portion of the chain corresponds to 339-360 (CSIPRRSLYDEVQIIQTISSVQ). Residues 361–381 (WVIFMGEMATSLFSIIVGMLG) traverse the membrane as a helical segment. Topologically, residues 382 to 393 (AAYVLEAIAKDN) are cytoplasmic. A helical membrane pass occupies residues 394–414 (IIPGLEIFAHSPLYSLIFTWI). Topologically, residues 415–430 (LTQLCLFSDVNKIATF) are vacuolar. The chain crosses the membrane as a helical span at residues 431-451 (ITMTFLMTFVVMNLACFLLGI). Residues 452–462 (SSAPNFRPSFK) are Cytoplasmic-facing. A helical membrane pass occupies residues 463 to 482 (YFNRYTTAIGALLSVVAMLI). Topologically, residues 483-487 (VDGIS) are vacuolar. The chain crosses the membrane as a helical span at residues 488–506 (ASVLFLAMILLFLFIHYFS). The Cytoplasmic portion of the chain corresponds to 507 to 1120 (PPKSWGDVSQ…SQTMTVTTAL (614 aa)). 3 positions are modified to phosphoserine: Ser654, Ser915, and Ser918.

The protein belongs to the SLC12A transporter family.

It is found in the vacuole membrane. In terms of biological role, catalyzes the coordinated symport of chloride with potassium ions across the vacuolar membrane. Involved in vacuolar osmoregulation. This Saccharomyces cerevisiae (strain ATCC 204508 / S288c) (Baker's yeast) protein is Vacuolar cation-chloride cotransporter 1.